The primary structure comprises 854 residues: DNA mismatch repair protein MutS (854 aa).

ATP is bound at residue 615 to 622 (GPNMGGKS).

It belongs to the DNA mismatch repair MutS family.

This protein is involved in the repair of mismatches in DNA. It is possible that it carries out the mismatch recognition step. This protein has a weak ATPase activity. The polypeptide is DNA mismatch repair protein MutS (Proteus mirabilis (strain HI4320)).